Consider the following 248-residue polypeptide: Granzyme B (248 aa).

The N-terminal stretch at 1 to 18 (MKLLLLLLSFSLAPKTEA) is a signal peptide. The propeptide at 19–20 (GE) is activation peptide. Residues 21 to 246 (IIGGHEAKPH…FLSWIKKTMK (226 aa)) enclose the Peptidase S1 domain. A disulfide bridge connects residues Cys50 and Cys66. Residues His65 and Asp109 each act as charge relay system in the active site. Cystine bridges form between Cys143/Cys210 and Cys174/Cys189. Ser204 serves as the catalytic Charge relay system.

Belongs to the peptidase S1 family. Granzyme subfamily.

It localises to the secreted. The protein localises to the cytolytic granule. It catalyses the reaction Preferential cleavage: -Asp-|-Xaa- &gt;&gt; -Asn-|-Xaa- &gt; -Met-|-Xaa-, -Ser-|-Xaa-.. Its activity is regulated as follows. Inactivated by the serine protease inhibitor diisopropylfluorophosphate. Abundant protease in the cytosolic granules of cytotoxic T-cells and NK-cells which activates caspase-independent pyroptosis when delivered into the target cell through the immunological synapse. It cleaves after Asp. Once delivered into the target cell, acts by catalyzing cleavage of gasdermin-E (GSDME), releasing the pore-forming moiety of GSDME, thereby triggering pyroptosis and target cell death. Seems to be linked to an activation cascade of caspases (aspartate-specific cysteine proteases) responsible for apoptosis execution. Cleaves caspase-3 and -9 (CASP3 and CASP9, respectively) to give rise to active enzymes mediating apoptosis. Cleaves and activates CASP7 in response to bacterial infection, promoting plasma membrane repair. This chain is Granzyme B (Gzmb), found in Rattus norvegicus (Rat).